The primary structure comprises 525 residues: Protein translocase subunit SecD (525 aa).

Helical transmembrane passes span 9-29 (LYLV…SLLG), 368-388 (VLIG…GFGM), 392-412 (LAVV…QATL), 415-435 (PGIA…VLIF), 460-480 (FSTI…LYQF), and 487-507 (GFAV…IFVT).

Belongs to the SecD/SecF family. SecD subfamily. As to quaternary structure, forms a complex with SecF. Part of the essential Sec protein translocation apparatus which comprises SecA, SecYEG and auxiliary proteins SecDF-YajC and YidC.

The protein localises to the cell inner membrane. In terms of biological role, part of the Sec protein translocase complex. Interacts with the SecYEG preprotein conducting channel. SecDF uses the proton motive force (PMF) to complete protein translocation after the ATP-dependent function of SecA. In Magnetococcus marinus (strain ATCC BAA-1437 / JCM 17883 / MC-1), this protein is Protein translocase subunit SecD.